We begin with the raw amino-acid sequence, 598 residues long: DNA ligase (598 aa).

D258 is a binding site for ATP. The active-site N6-AMP-lysine intermediate is the K260. ATP contacts are provided by R265, R280, E310, F350, R427, and K433.

The protein belongs to the ATP-dependent DNA ligase family. Mg(2+) is required as a cofactor.

It catalyses the reaction ATP + (deoxyribonucleotide)n-3'-hydroxyl + 5'-phospho-(deoxyribonucleotide)m = (deoxyribonucleotide)n+m + AMP + diphosphate.. Its function is as follows. DNA ligase that seals nicks in double-stranded DNA during DNA replication, DNA recombination and DNA repair. The sequence is that of DNA ligase from Sulfolobus acidocaldarius (strain ATCC 33909 / DSM 639 / JCM 8929 / NBRC 15157 / NCIMB 11770).